The primary structure comprises 382 residues: Na(+)/H(+) antiporter NhaA (382 aa).

11 helical membrane-spanning segments follow: residues 14–34, 47–67, 87–107, 117–137, 146–166, 171–191, 205–225, 247–267, 271–291, 321–341, and 353–373; these read AGGILLVIAAAIAMVIANSAM, FGMSVSHWINDGLMAVFFLLI, IFPAIAAVGGMLAPALIYVAF, GWAIPAATDIAFALGIMALLG, VFLLALAIIDDLGVVVIIALF, LSTIALTIGFIMTGVLFMLNA, LILWIAVLKSGVHATLAGVVI, ALHPYVAFAILPVFAFANAGI, GVSLAGLTSMLPLGVALGLFL, IFAVSVLCGIGFTMSIFISSL, and YARLGILMGSTTAALLGYSLL.

It belongs to the NhaA Na(+)/H(+) (TC 2.A.33) antiporter family.

The protein resides in the cell inner membrane. It carries out the reaction Na(+)(in) + 2 H(+)(out) = Na(+)(out) + 2 H(+)(in). Its function is as follows. Na(+)/H(+) antiporter that extrudes sodium in exchange for external protons. The protein is Na(+)/H(+) antiporter NhaA of Vibrio cholerae serotype O1 (strain ATCC 39541 / Classical Ogawa 395 / O395).